A 1438-amino-acid chain; its full sequence is Lysophospholipase NTE1 (1438 aa).

The Cytoplasmic segment spans residues 1 to 25 (MDSDTSSADFHSTETLVSTPKYSYG). A helical transmembrane segment spans residues 26–46 (VLINVILLVSWTCFRVVNWFL). Residues 47–64 (VTLPSILLGMLSKTFQIT) are Lumenal-facing. The helical transmembrane segment at 65–85 (LSLSSILMFVVAVTAICFLVV) threads the bilayer. Residues 86-1438 (RYKYLTRYSR…HVSLSRRNSI (1353 aa)) are Cytoplasmic-facing. Residues 432-450 (YETQTIPNESEDSPTIQRS) are compositionally biased toward polar residues. Residues 432-464 (YETQTIPNESEDSPTIQRSSLRRRASHSTSLRK) are disordered. A nucleoside 3',5'-cyclic phosphate contacts are provided by residues 590–720 (GDDS…LTID) and 707–856 (RLKR…VANR). Residues 1131–1295 (LVLGGGGSRG…LDNLPVSEMK (165 aa)) form the PNPLA domain. Positions 1135–1140 (GGGSRG) match the GXGXXG motif. The GXSXG motif lies at 1162–1166 (GTSIG). Residue serine 1164 is the Nucleophile of the active site. The Proton acceptor role is filled by aspartate 1282. The short motif at 1282 to 1284 (DGG) is the DGA/G element.

This sequence belongs to the NTE family.

Its subcellular location is the endoplasmic reticulum membrane. The enzyme catalyses a 1-acyl-sn-glycero-3-phosphocholine + H2O = sn-glycerol 3-phosphocholine + a fatty acid + H(+). Its activity is regulated as follows. Inhibited by organophosphorus esters. Its function is as follows. Intracellular phospholipase B that catalyzes the double deacylation of phosphatidylcholine (PC) to glycerophosphocholine (GroPCho). Plays an important role in membrane lipid homeostasis. Responsible for the rapid PC turnover in response to inositol, elevated temperatures, or when choline is present in the growth medium. This chain is Lysophospholipase NTE1 (NTE1), found in Meyerozyma guilliermondii (strain ATCC 6260 / CBS 566 / DSM 6381 / JCM 1539 / NBRC 10279 / NRRL Y-324) (Yeast).